The sequence spans 545 residues: Glucose-6-phosphate isomerase (545 aa).

E351 acts as the Proton donor in catalysis. Catalysis depends on residues H382 and K510.

Belongs to the GPI family.

Its subcellular location is the cytoplasm. It catalyses the reaction alpha-D-glucose 6-phosphate = beta-D-fructose 6-phosphate. It participates in carbohydrate biosynthesis; gluconeogenesis. Its pathway is carbohydrate degradation; glycolysis; D-glyceraldehyde 3-phosphate and glycerone phosphate from D-glucose: step 2/4. Functionally, catalyzes the reversible isomerization of glucose-6-phosphate to fructose-6-phosphate. The protein is Glucose-6-phosphate isomerase of Shewanella frigidimarina (strain NCIMB 400).